We begin with the raw amino-acid sequence, 105 residues long: MISVDFSKGLVPTIILDDQNGDVLMLAYMNEESYHKTLETGYTWFFSRSRNELWNKGATSGHTQKVKQIWTDCDNDTLLIRVTQIGPACHTGKKSCFFNLIKEDF.

Aspartate 72 contributes to the Mg(2+) binding site. Cysteine 73 serves as a coordination point for Zn(2+). Aspartate 74 and aspartate 76 together coordinate Mg(2+). 2 residues coordinate Zn(2+): cysteine 89 and cysteine 96.

This sequence belongs to the PRA-CH family. Homodimer. Mg(2+) serves as cofactor. Zn(2+) is required as a cofactor.

It is found in the cytoplasm. The catalysed reaction is 1-(5-phospho-beta-D-ribosyl)-5'-AMP + H2O = 1-(5-phospho-beta-D-ribosyl)-5-[(5-phospho-beta-D-ribosylamino)methylideneamino]imidazole-4-carboxamide. Its pathway is amino-acid biosynthesis; L-histidine biosynthesis; L-histidine from 5-phospho-alpha-D-ribose 1-diphosphate: step 3/9. In terms of biological role, catalyzes the hydrolysis of the adenine ring of phosphoribosyl-AMP. This is Phosphoribosyl-AMP cyclohydrolase from Listeria monocytogenes serotype 4a (strain HCC23).